The sequence spans 598 residues: Elongation factor 4 (598 aa).

The region spanning 3-185 is the tr-type G domain; the sequence is QHIRNFSIIA…MIVARIPPPE (183 aa). GTP contacts are provided by residues 15–20 and 132–135; these read DHGKST and NKID.

The protein belongs to the TRAFAC class translation factor GTPase superfamily. Classic translation factor GTPase family. LepA subfamily.

The protein localises to the cell inner membrane. The enzyme catalyses GTP + H2O = GDP + phosphate + H(+). Functionally, required for accurate and efficient protein synthesis under certain stress conditions. May act as a fidelity factor of the translation reaction, by catalyzing a one-codon backward translocation of tRNAs on improperly translocated ribosomes. Back-translocation proceeds from a post-translocation (POST) complex to a pre-translocation (PRE) complex, thus giving elongation factor G a second chance to translocate the tRNAs correctly. Binds to ribosomes in a GTP-dependent manner. The sequence is that of Elongation factor 4 from Nitrosomonas eutropha (strain DSM 101675 / C91 / Nm57).